The sequence spans 147 residues: Large ribosomal subunit protein uL13 (147 aa).

The protein belongs to the universal ribosomal protein uL13 family. As to quaternary structure, part of the 50S ribosomal subunit.

This protein is one of the early assembly proteins of the 50S ribosomal subunit, although it is not seen to bind rRNA by itself. It is important during the early stages of 50S assembly. The polypeptide is Large ribosomal subunit protein uL13 (Streptomyces avermitilis (strain ATCC 31267 / DSM 46492 / JCM 5070 / NBRC 14893 / NCIMB 12804 / NRRL 8165 / MA-4680)).